We begin with the raw amino-acid sequence, 445 residues long: Methionine aminopeptidase 2-1 (445 aa).

A disordered region spans residues 1-86 (MAAQASEDLQ…VQSEPPRVPL (86 aa)). Acidic residues predominate over residues 34–46 (GEAEDDSDDDADE). The span at 59-74 (AKKKKKRKSKKKKKGG) shows a compositional bias: basic residues. Position 198 (H198) interacts with substrate. Residues D218, D229, and H298 each coordinate a divalent metal cation. A substrate-binding site is contributed by H306. A divalent metal cation is bound by residues E331 and E426.

It belongs to the peptidase M24A family. Methionine aminopeptidase eukaryotic type 2 subfamily. The cofactor is Co(2+). Requires Zn(2+) as cofactor. Mn(2+) is required as a cofactor. It depends on Fe(2+) as a cofactor.

It localises to the cytoplasm. The enzyme catalyses Release of N-terminal amino acids, preferentially methionine, from peptides and arylamides.. Functionally, cotranslationally removes the N-terminal methionine from nascent proteins. The N-terminal methionine is often cleaved when the second residue in the primary sequence is small and uncharged (Met-Ala-, Cys, Gly, Pro, Ser, Thr, or Val). The protein is Methionine aminopeptidase 2-1 of Aspergillus flavus (strain ATCC 200026 / FGSC A1120 / IAM 13836 / NRRL 3357 / JCM 12722 / SRRC 167).